The following is a 576-amino-acid chain: Arginine--tRNA ligase (576 aa).

The 'HIGH' region motif lies at 122–132; it reads PNVAKEMHVGH.

The protein belongs to the class-I aminoacyl-tRNA synthetase family. As to quaternary structure, monomer.

It localises to the cytoplasm. The catalysed reaction is tRNA(Arg) + L-arginine + ATP = L-arginyl-tRNA(Arg) + AMP + diphosphate. This chain is Arginine--tRNA ligase, found in Thermobifida fusca (strain YX).